The chain runs to 1230 residues: Cullin-associated NEDD8-dissociated protein 1 (1230 aa).

Position 2 is an N-acetylalanine (alanine 2). HEAT repeat units lie at residues alanine 2–isoleucine 39, aspartate 44–glutamate 81, glutamine 83–proline 119, cysteine 131–glutamine 165, asparagine 171–asparagine 208, valine 210–histidine 247, arginine 248–phenylalanine 282, glutamate 289–glutamate 366, glutamate 370–proline 407, proline 424–glycine 467, glutamine 471–proline 510, and proline 515–proline 552. The disordered stretch occupies residues aspartate 315 to aspartate 344. Residue serine 335 is modified to Phosphoserine. Serine 558 carries the phosphoserine modification. HEAT repeat units lie at residues proline 563–aspartate 602, proline 606–aspartate 643, proline 646–aspartate 683, alanine 688–serine 725, lysine 729–asparagine 768, leucine 770–arginine 808, alanine 809–valine 845, serine 852–proline 889, glutamate 890–proline 927, tyrosine 928–leucine 960, isoleucine 961–glutamine 998, proline 1002–serine 1039, aspartate 1043–leucine 1097, arginine 1099–leucine 1133, and glutamine 1140–alanine 1189. An N6-acetyllysine modification is found at lysine 971.

The protein belongs to the CAND family. In terms of assembly, interacts with TBP. Part of a complex that contains CUL1 and RBX1. Interacts with unneddylated cullins: interacts with CUL1, CUL2, CUL3, CUL4A, CUL4B and CUL5. Does not bind neddylated CUL1. Interaction with cullins is abolished in presence of COMMD1, which antagonizes with CAND1 for interacting with cullins. Interacts with ERCC6. Interacts with DCUN1D1, DCUN1D2, DCUN1D3, DCUN1D4 and DCUN1D5; these interactions are bridged by cullins and strongly inhibits the neddylation of cullins.

Its subcellular location is the cytoplasm. It localises to the nucleus. Its function is as follows. Key assembly factor of SCF (SKP1-CUL1-F-box protein) E3 ubiquitin ligase complexes that promotes the exchange of the substrate-recognition F-box subunit in SCF complexes, thereby playing a key role in the cellular repertoire of SCF complexes. Acts as a F-box protein exchange factor. The exchange activity of CAND1 is coupled with cycles of neddylation conjugation: in the deneddylated state, cullin-binding CAND1 binds CUL1-RBX1, increasing dissociation of the SCF complex and promoting exchange of the F-box protein. Probably plays a similar role in other cullin-RING E3 ubiquitin ligase complexes. The chain is Cullin-associated NEDD8-dissociated protein 1 (Cand1) from Mus musculus (Mouse).